We begin with the raw amino-acid sequence, 404 residues long: 6-deoxyerythronolide B hydroxylase (404 aa).

C351 contacts heme.

It belongs to the cytochrome P450 family. Heme serves as cofactor.

The protein resides in the cytoplasm. It catalyses the reaction 6-deoxyerythronolide B + 2 reduced [2Fe-2S]-[ferredoxin] + O2 + 2 H(+) = erythronolide B + 2 oxidized [2Fe-2S]-[ferredoxin] + H2O. It functions in the pathway antibiotic biosynthesis; erythromycin biosynthesis. Its function is as follows. Catalyzes the conversion of 6-deoxyerythronolide B (6-DEB) to erythronolide B (EB) by the insertion of an oxygen at the 6S position of 6-DEB. Requires the participation of a ferredoxin and a ferredoxin reductase for the transfer of electrons from NADPH to the monooxygenase. In Saccharopolyspora erythraea (strain ATCC 11635 / DSM 40517 / JCM 4748 / NBRC 13426 / NCIMB 8594 / NRRL 2338), this protein is 6-deoxyerythronolide B hydroxylase.